Consider the following 280-residue polypeptide: Orotidine 5'-phosphate decarboxylase (280 aa).

Residue lysine 97 is the Proton donor of the active site.

The protein belongs to the OMP decarboxylase family. Type 2 subfamily.

The catalysed reaction is orotidine 5'-phosphate + H(+) = UMP + CO2. It functions in the pathway pyrimidine metabolism; UMP biosynthesis via de novo pathway; UMP from orotate: step 2/2. The protein is Orotidine 5'-phosphate decarboxylase (pyrF) of Corynebacterium efficiens (strain DSM 44549 / YS-314 / AJ 12310 / JCM 11189 / NBRC 100395).